Reading from the N-terminus, the 355-residue chain is Peptide chain release factor 1 (355 aa).

Residue glutamine 231 is modified to N5-methylglutamine. The segment covering 281-291 (ERLAKESEARK) has biased composition (basic and acidic residues). The interval 281–302 (ERLAKESEARKSQVGSGDRSER) is disordered.

It belongs to the prokaryotic/mitochondrial release factor family. In terms of processing, methylated by PrmC. Methylation increases the termination efficiency of RF1.

It localises to the cytoplasm. In terms of biological role, peptide chain release factor 1 directs the termination of translation in response to the peptide chain termination codons UAG and UAA. The sequence is that of Peptide chain release factor 1 from Campylobacter jejuni subsp. doylei (strain ATCC BAA-1458 / RM4099 / 269.97).